We begin with the raw amino-acid sequence, 423 residues long: Serine hydroxymethyltransferase (423 aa).

(6S)-5,6,7,8-tetrahydrofolate-binding positions include L121 and 125 to 127; that span reads GHL. K230 carries the N6-(pyridoxal phosphate)lysine modification. 355–357 contacts (6S)-5,6,7,8-tetrahydrofolate; it reads SPF.

Belongs to the SHMT family. As to quaternary structure, homodimer. Pyridoxal 5'-phosphate serves as cofactor.

Its subcellular location is the cytoplasm. It carries out the reaction (6R)-5,10-methylene-5,6,7,8-tetrahydrofolate + glycine + H2O = (6S)-5,6,7,8-tetrahydrofolate + L-serine. The protein operates within one-carbon metabolism; tetrahydrofolate interconversion. Its pathway is amino-acid biosynthesis; glycine biosynthesis; glycine from L-serine: step 1/1. Its function is as follows. Catalyzes the reversible interconversion of serine and glycine with tetrahydrofolate (THF) serving as the one-carbon carrier. This reaction serves as the major source of one-carbon groups required for the biosynthesis of purines, thymidylate, methionine, and other important biomolecules. Also exhibits THF-independent aldolase activity toward beta-hydroxyamino acids, producing glycine and aldehydes, via a retro-aldol mechanism. In Hydrogenovibrio crunogenus (strain DSM 25203 / XCL-2) (Thiomicrospira crunogena), this protein is Serine hydroxymethyltransferase.